Reading from the N-terminus, the 106-residue chain is uncharacterized protein (106 aa).

3 consecutive transmembrane segments (helical) span residues 4-24 (LPVV…IGFL), 27-47 (MLLR…LFII), and 78-98 (VLIL…INML).

It localises to the cell membrane. This is an uncharacterized protein from Bacillus subtilis (strain 168).